A 465-amino-acid polypeptide reads, in one-letter code: ATP synthase subunit beta (465 aa).

ATP is bound at residue 152–159 (GGAGVGKT).

This sequence belongs to the ATPase alpha/beta chains family. In terms of assembly, F-type ATPases have 2 components, CF(1) - the catalytic core - and CF(0) - the membrane proton channel. CF(1) has five subunits: alpha(3), beta(3), gamma(1), delta(1), epsilon(1). CF(0) has three main subunits: a(1), b(2) and c(9-12). The alpha and beta chains form an alternating ring which encloses part of the gamma chain. CF(1) is attached to CF(0) by a central stalk formed by the gamma and epsilon chains, while a peripheral stalk is formed by the delta and b chains.

It is found in the cell inner membrane. The catalysed reaction is ATP + H2O + 4 H(+)(in) = ADP + phosphate + 5 H(+)(out). Functionally, produces ATP from ADP in the presence of a proton gradient across the membrane. The catalytic sites are hosted primarily by the beta subunits. In Campylobacter concisus (strain 13826), this protein is ATP synthase subunit beta.